We begin with the raw amino-acid sequence, 152 residues long: MALYEHVFLARQDISAQQVDALVEQYKGVIEANGGKVGRIENWGLKSLTYRIKKNRKAHYALMDIDAPPAAIQEMERQMRISEDVLRYMTIAVEKHEEGPSAMLQKRDRDDRGPREGGDRGPRREFGDRPPRRDGDFQRGPRPDRAPREDRA.

The interval 96-152 (HEEGPSAMLQKRDRDDRGPREGGDRGPRREFGDRPPRRDGDFQRGPRPDRAPREDRA) is disordered.

This sequence belongs to the bacterial ribosomal protein bS6 family.

Functionally, binds together with bS18 to 16S ribosomal RNA. This is Small ribosomal subunit protein bS6 from Rhizobium etli (strain ATCC 51251 / DSM 11541 / JCM 21823 / NBRC 15573 / CFN 42).